We begin with the raw amino-acid sequence, 431 residues long: NADH-quinone oxidoreductase subunit D 2 (431 aa).

Residues 1 to 27 (MNDHKGLGGLDTEATPGSFGAGEPPRA) are disordered.

It belongs to the complex I 49 kDa subunit family. NDH-1 is composed of 14 different subunits. Subunits NuoB, C, D, E, F, and G constitute the peripheral sector of the complex.

The protein localises to the cell inner membrane. The enzyme catalyses a quinone + NADH + 5 H(+)(in) = a quinol + NAD(+) + 4 H(+)(out). NDH-1 shuttles electrons from NADH, via FMN and iron-sulfur (Fe-S) centers, to quinones in the respiratory chain. The immediate electron acceptor for the enzyme in this species is believed to be ubiquinone. Couples the redox reaction to proton translocation (for every two electrons transferred, four hydrogen ions are translocated across the cytoplasmic membrane), and thus conserves the redox energy in a proton gradient. This chain is NADH-quinone oxidoreductase subunit D 2, found in Anaeromyxobacter sp. (strain Fw109-5).